A 373-amino-acid chain; its full sequence is Leucine aminopeptidase 1 (373 aa).

A signal peptide spans 1 to 18 (MKLLSVLALSATATSVLG). The Zn(2+) site is built by H176 and D195. N196 carries an N-linked (GlcNAc...) asparagine glycan. Residues E234 and D261 each contribute to the Zn(2+) site. The N-linked (GlcNAc...) asparagine glycan is linked to N288. A disulfide bridge connects residues C310 and C314. H343 is a binding site for Zn(2+). N348 is a glycosylation site (N-linked (GlcNAc...) asparagine).

The protein belongs to the peptidase M28 family. M28E subfamily. As to quaternary structure, monomer. The cofactor is Zn(2+).

The protein localises to the secreted. With respect to regulation, activity is inhibited by EDTA, o-phenanthroline, bestatin and amastatin. In terms of biological role, extracellular aminopeptidase which contributes to pathogenicity. The chain is Leucine aminopeptidase 1 (LAP1) from Trichophyton rubrum (Athlete's foot fungus).